The primary structure comprises 532 residues: Fatty-acid amide hydrolase 2-A (532 aa).

A helical membrane pass occupies residues 9-29 (FLGRLLRAVVWILFAAFKLFA). Catalysis depends on charge relay system residues Lys-129 and Ser-204. Ser-228 serves as the catalytic Acyl-ester intermediate.

The protein belongs to the amidase family.

It localises to the membrane. The enzyme catalyses N-(5Z,8Z,11Z,14Z-eicosatetraenoyl)-ethanolamine + H2O = ethanolamine + (5Z,8Z,11Z,14Z)-eicosatetraenoate. The catalysed reaction is (9Z)-octadecenamide + H2O = (9Z)-octadecenoate + NH4(+). This Danio rerio (Zebrafish) protein is Fatty-acid amide hydrolase 2-A (faah2a).